We begin with the raw amino-acid sequence, 32 residues long: Photosystem II reaction center protein Z (32 aa).

Residues 12 to 32 (FGAAAWIGLVLLVGTLYYFVV) traverse the membrane as a helical segment.

This sequence belongs to the PsbZ family. PSII is composed of 1 copy each of membrane proteins PsbA, PsbB, PsbC, PsbD, PsbE, PsbF, PsbH, PsbI, PsbJ, PsbK, PsbL, PsbM, PsbT, PsbY, PsbZ, Psb30/Ycf12, at least 3 peripheral proteins of the oxygen-evolving complex and a large number of cofactors. It forms dimeric complexes.

It localises to the plastid. The protein resides in the chloroplast thylakoid membrane. May control the interaction of photosystem II (PSII) cores with the light-harvesting antenna, regulates electron flow through the 2 photosystem reaction centers. PSII is a light-driven water plastoquinone oxidoreductase, using light energy to abstract electrons from H(2)O, generating a proton gradient subsequently used for ATP formation. The polypeptide is Photosystem II reaction center protein Z (Euglena granulata).